The sequence spans 303 residues: Oxygen-dependent coproporphyrinogen-III oxidase (303 aa).

Position 93 (Ser-93) interacts with substrate. Residues His-97 and His-107 each coordinate a divalent metal cation. The active-site Proton donor is the His-107. 109–111 (NVR) contributes to the substrate binding site. His-146 and His-176 together coordinate a divalent metal cation. The segment at 241–276 (YVEFNLVYDRGTLFGLQSGGRTESILMSLPPQVRWG) is important for dimerization. 259–261 (GGR) is a substrate binding site.

The protein belongs to the aerobic coproporphyrinogen-III oxidase family. As to quaternary structure, homodimer. Requires a divalent metal cation as cofactor.

The protein resides in the cytoplasm. It catalyses the reaction coproporphyrinogen III + O2 + 2 H(+) = protoporphyrinogen IX + 2 CO2 + 2 H2O. It participates in porphyrin-containing compound metabolism; protoporphyrin-IX biosynthesis; protoporphyrinogen-IX from coproporphyrinogen-III (O2 route): step 1/1. Its function is as follows. Involved in the heme biosynthesis. Catalyzes the aerobic oxidative decarboxylation of propionate groups of rings A and B of coproporphyrinogen-III to yield the vinyl groups in protoporphyrinogen-IX. In Pseudomonas putida (strain ATCC 47054 / DSM 6125 / CFBP 8728 / NCIMB 11950 / KT2440), this protein is Oxygen-dependent coproporphyrinogen-III oxidase.